The chain runs to 725 residues: Aminopeptidase RNPEPL1 (725 aa).

326 to 330 lines the substrate pocket; sequence VAMEN. His-353 is a binding site for Zn(2+). Residue Glu-354 is the Proton acceptor of the active site. Residues His-357 and Glu-376 each contribute to the Zn(2+) site. A disordered region spans residues 676–699; it reads GLGSSTEPASEPSTELGKAEADTD. The segment covering 679 to 690 has biased composition (low complexity); it reads SSTEPASEPSTE.

The protein belongs to the peptidase M1 family. It depends on Zn(2+) as a cofactor. Ubiquitously expressed. Expressed at relatively higher levels in heart and skeletal muscle.

It carries out the reaction Release of N-terminal amino acids, preferentially methionine, from peptides and arylamides.. Its activity is regulated as follows. Inhibited by calcium but not affected by chloride ions. Inhibited by amastatin and to a lower extent by bestatin. Weakly inhibited by puromycin. Functionally, broad specificity aminopeptidase which preferentially hydrolyzes an N-terminal methionine, citrulline or glutamine. This is Aminopeptidase RNPEPL1 from Homo sapiens (Human).